The primary structure comprises 206 residues: 3-isopropylmalate dehydratase small subunit (206 aa).

This sequence belongs to the LeuD family. LeuD type 1 subfamily. In terms of assembly, heterodimer of LeuC and LeuD.

The enzyme catalyses (2R,3S)-3-isopropylmalate = (2S)-2-isopropylmalate. It participates in amino-acid biosynthesis; L-leucine biosynthesis; L-leucine from 3-methyl-2-oxobutanoate: step 2/4. Catalyzes the isomerization between 2-isopropylmalate and 3-isopropylmalate, via the formation of 2-isopropylmaleate. The chain is 3-isopropylmalate dehydratase small subunit from Leptospira borgpetersenii serovar Hardjo-bovis (strain L550).